The primary structure comprises 635 residues: Very-long-chain aldehyde decarbonylase GL1-6 (635 aa).

4 consecutive transmembrane segments (helical) span residues 46–66 (LLNFMVFPMLLLRLLYGQLWI), 100–120 (IILTALVFYLVSATMPQAQVA), 127–147 (GMVVTAVLHAGPVEFLYYWLH), and 183–203 (VVYFVLLAIPILSTVATGTVS). Positions 139 to 273 (VEFLYYWLHR…MPVYDYIYGT (135 aa)) constitute a Fatty acid hydroxylase domain.

This sequence belongs to the sterol desaturase family. Homodimer.

It is found in the endoplasmic reticulum membrane. It carries out the reaction a long-chain fatty aldehyde + 2 NADPH + O2 + H(+) = a long-chain alkane + formate + 2 NADP(+) + H2O. Aldehyde decarbonylase involved in the conversion of aldehydes to alkanes. Core component of a very-long-chain alkane synthesis complex. This is Very-long-chain aldehyde decarbonylase GL1-6 from Oryza sativa subsp. indica (Rice).